Reading from the N-terminus, the 1013-residue chain is Putative DNA polymerase 060R (1013 aa).

The protein belongs to the DNA polymerase type-B family.

It carries out the reaction DNA(n) + a 2'-deoxyribonucleoside 5'-triphosphate = DNA(n+1) + diphosphate. In terms of biological role, DNA-directed DNA polymerase involved in viral DNA replication. This chain is Putative DNA polymerase 060R, found in Dryophytes versicolor (chameleon treefrog).